The chain runs to 269 residues: Formamidopyrimidine-DNA glycosylase (269 aa).

The active-site Schiff-base intermediate with DNA is the Pro-2. Glu-3 (proton donor) is an active-site residue. Catalysis depends on Lys-57, which acts as the Proton donor; for beta-elimination activity. Positions 90, 109, and 150 each coordinate DNA. The FPG-type zinc finger occupies 235-269 (QVYGRAGEPCRACGTPIESAKHGQRSTFFCPRCQR). Arg-259 (proton donor; for delta-elimination activity) is an active-site residue.

This sequence belongs to the FPG family. In terms of assembly, monomer. The cofactor is Zn(2+).

The enzyme catalyses Hydrolysis of DNA containing ring-opened 7-methylguanine residues, releasing 2,6-diamino-4-hydroxy-5-(N-methyl)formamidopyrimidine.. It catalyses the reaction 2'-deoxyribonucleotide-(2'-deoxyribose 5'-phosphate)-2'-deoxyribonucleotide-DNA = a 3'-end 2'-deoxyribonucleotide-(2,3-dehydro-2,3-deoxyribose 5'-phosphate)-DNA + a 5'-end 5'-phospho-2'-deoxyribonucleoside-DNA + H(+). Functionally, involved in base excision repair of DNA damaged by oxidation or by mutagenic agents. Acts as a DNA glycosylase that recognizes and removes damaged bases. Has a preference for oxidized purines, such as 7,8-dihydro-8-oxoguanine (8-oxoG). Has AP (apurinic/apyrimidinic) lyase activity and introduces nicks in the DNA strand. Cleaves the DNA backbone by beta-delta elimination to generate a single-strand break at the site of the removed base with both 3'- and 5'-phosphates. This is Formamidopyrimidine-DNA glycosylase from Serratia proteamaculans (strain 568).